Consider the following 222-residue polypeptide: Cytidylate kinase (222 aa).

Position 7–15 (7–15 (GPSASGKST)) interacts with ATP.

Belongs to the cytidylate kinase family. Type 1 subfamily.

It localises to the cytoplasm. The catalysed reaction is CMP + ATP = CDP + ADP. It catalyses the reaction dCMP + ATP = dCDP + ADP. The polypeptide is Cytidylate kinase (Aquifex aeolicus (strain VF5)).